The following is a 796-amino-acid chain: Putative aconitate hydratase, mitochondrial (796 aa).

The N-terminal 28 residues, 1-28, are a transit peptide targeting the mitochondrion; sequence MLRQIVSQRSAARRQLIDQLAPCLRRGL. Residues Gln-108 and 201 to 203 contribute to the substrate site; that span reads DSH. [4Fe-4S] cluster-binding residues include Cys-399, Cys-462, and Cys-465. Residues Arg-489 and Arg-494 each contribute to the substrate site. Positions 540–569 are disordered; it reads EPPTGQDLPSKGFEAGNPAFQPSAPVPDSS. 685 to 686 contributes to the substrate binding site; sequence AR.

This sequence belongs to the aconitase/IPM isomerase family.

Its subcellular location is the mitochondrion. Its function is as follows. Has no detectable activity towards cis-acontiate or cis-homoaconitate. This is Putative aconitate hydratase, mitochondrial (acoB) from Emericella nidulans (strain FGSC A4 / ATCC 38163 / CBS 112.46 / NRRL 194 / M139) (Aspergillus nidulans).